The following is a 358-amino-acid chain: Ion-translocating oxidoreductase complex subunit D (358 aa).

The next 4 helical transmembrane spans lie at 19–39 (IMLW…YYFG), 41–61 (GVLL…FIAI), 79–99 (LTAL…VIII), and 125–145 (IGYV…MPPI). At Thr-186 the chain carries FMN phosphoryl threonine. 5 consecutive transmembrane segments (helical) span residues 220–240 (FAQG…FLIL), 248–268 (IPVA…FTGF), 271–291 (LSAI…FIAT), 297–317 (SITP…VYLI), and 321–341 (GNYP…VPLI).

It belongs to the NqrB/RnfD family. As to quaternary structure, the complex is composed of six subunits: RnfA, RnfB, RnfC, RnfD, RnfE and RnfG. The cofactor is FMN.

The protein resides in the cell inner membrane. Its function is as follows. Part of a membrane-bound complex that couples electron transfer with translocation of ions across the membrane. The chain is Ion-translocating oxidoreductase complex subunit D from Haemophilus influenzae (strain PittEE).